The chain runs to 92 residues: Small ribosomal subunit protein uS19 (92 aa).

This sequence belongs to the universal ribosomal protein uS19 family.

Its function is as follows. Protein S19 forms a complex with S13 that binds strongly to the 16S ribosomal RNA. This is Small ribosomal subunit protein uS19 from Desulfosudis oleivorans (strain DSM 6200 / JCM 39069 / Hxd3) (Desulfococcus oleovorans).